A 162-amino-acid chain; its full sequence is Peroxiredoxin-2B (162 aa).

A Thioredoxin domain is found at Ile4–Leu162. Cys51 functions as the Cysteine sulfenic acid (-SOH) intermediate in the catalytic mechanism.

Belongs to the peroxiredoxin family. Prx5 subfamily. As to quaternary structure, monomer. As to expression, expressed in all tissues but mostly in reproductive tissues such as buds, flowers, siliques and seeds.

It localises to the cytoplasm. The enzyme catalyses [glutaredoxin]-dithiol + a hydroperoxide = [glutaredoxin]-disulfide + an alcohol + H2O. Reduces hydrogen peroxide and alkyl hydroperoxides with reducing equivalents provided through the thioredoxin or glutaredoxin system. May be involved in intracellular redox signaling. Functionally, thiol-specific peroxidase that catalyzes the reduction of hydrogen peroxide and organic hydroperoxides to water and alcohols, respectively. Plays a role in cell protection against oxidative stress by detoxifying peroxides and as sensor of hydrogen peroxide-mediated signaling events. This Arabidopsis thaliana (Mouse-ear cress) protein is Peroxiredoxin-2B (PRXIIB).